Consider the following 289-residue polypeptide: Probable endonuclease 4 (289 aa).

The Zn(2+) site is built by His74, His115, Glu150, Asp184, His187, His218, Asp231, His233, and Glu263.

Belongs to the AP endonuclease 2 family. It depends on Zn(2+) as a cofactor.

It carries out the reaction Endonucleolytic cleavage to 5'-phosphooligonucleotide end-products.. Functionally, endonuclease IV plays a role in DNA repair. It cleaves phosphodiester bonds at apurinic or apyrimidinic (AP) sites, generating a 3'-hydroxyl group and a 5'-terminal sugar phosphate. The chain is Probable endonuclease 4 from Mycoplasma mycoides subsp. mycoides SC (strain CCUG 32753 / NCTC 10114 / PG1).